The sequence spans 103 residues: Major carboxysome shell protein CsoS1 (103 aa).

Positions 9-94 (ALGMIETRGL…PHREVEPALG (86 aa)) constitute a BMC domain.

Belongs to the bacterial microcompartments protein family. CsoS1 subfamily. As to quaternary structure, homohexamer with a small central pore. A CsoS1-CsoS1D-CsoS2 complex can be isolated following expression in E.coli. Forms a CsoS2-CsoS1-RuBisCO complex.

Its subcellular location is the carboxysome. In terms of biological role, the major shell protein of the carboxysome, a polyhedral inclusion where RuBisCO (ribulose bisphosphate carboxylase, ccbL-ccbS) is sequestered. Assembles into hexamers which make sheets that form the facets of the polyhedral carboxysome. There are estimated to be 538 CsoS1 hexamers per carboxysome; note this number includes the probable carboxysome shell vertex proteins CsoS4A and CsoS4B. The chain is Major carboxysome shell protein CsoS1 from Prochlorococcus marinus subsp. pastoris (strain CCMP1986 / NIES-2087 / MED4).